The primary structure comprises 504 residues: D-alanine--D-alanyl carrier protein ligase (504 aa).

152 to 153 contacts ATP; that stretch reads TS. Asp197 lines the D-alanine pocket. Position 292-297 (292-297) interacts with ATP; sequence NTYGPT. Val301 contacts D-alanine. ATP is bound by residues Asp383, 394 to 397, and Lys492; that span reads YNGR. Lys492 is a binding site for D-alanine.

Belongs to the ATP-dependent AMP-binding enzyme family. DltA subfamily.

The protein localises to the cytoplasm. It catalyses the reaction holo-[D-alanyl-carrier protein] + D-alanine + ATP = D-alanyl-[D-alanyl-carrier protein] + AMP + diphosphate. Its pathway is cell wall biogenesis; lipoteichoic acid biosynthesis. Its function is as follows. Catalyzes the first step in the D-alanylation of lipoteichoic acid (LTA), the activation of D-alanine and its transfer onto the D-alanyl carrier protein (Dcp) DltC. In an ATP-dependent two-step reaction, forms a high energy D-alanyl-AMP intermediate, followed by transfer of the D-alanyl residue as a thiol ester to the phosphopantheinyl prosthetic group of the Dcp. D-alanylation of LTA plays an important role in modulating the properties of the cell wall in Gram-positive bacteria, influencing the net charge of the cell wall. This chain is D-alanine--D-alanyl carrier protein ligase, found in Bacillus cytotoxicus (strain DSM 22905 / CIP 110041 / 391-98 / NVH 391-98).